The following is a 707-amino-acid chain: Zinc finger CCHC domain-containing protein 8 (707 aa).

The residue at position 2 (alanine 2) is an N-acetylalanine. The segment at 16–44 (FDHPEESIPKPVHTRFKDDDGDEEDENGV) is disordered. Positions 34 to 43 (DDGDEEDENG) are enriched in acidic residues. A coiled-coil region spans residues 45-80 (GDAELRERLRQCEETIEQLRAENQELKRKLNILTRP). The CCHC-type zinc-finger motif lies at 227–244 (PHCFNCGSEEHQMKDCPM). RBM7 binding regions lie at residues 286 to 299 (FKPG…QDAL) and 309 to 324 (FIYR…GWLK). Threonine 342 carries the post-translational modification Phosphothreonine. Disordered stretches follow at residues 409-518 (APGV…LTLE), 531-607 (LEQA…TSLC), and 641-660 (QKLF…HSPI). A Glycyl lysine isopeptide (Lys-Gly) (interchain with G-Cter in SUMO2) cross-link involves residue lysine 413. Residues 456–465 (SQSSESFQFQ) show a composition bias toward low complexity. Positions 466-496 (PPLPPDTPPLPRGTPPPVFTPPLPKGTPPLT) are enriched in pro residues. Threonine 472, threonine 479, and threonine 485 each carry phosphothreonine. A Phosphothreonine; by GSK3 modification is found at threonine 492. Residues 516 to 539 (TLEELEEQQRRIWAALEQAESVNS) adopt a coiled-coil conformation. Residues 549-559 (LTGNSVASSPC) are compositionally biased toward polar residues. Threonine 577 carries the post-translational modification Phosphothreonine. Serine 598 is subject to Phosphoserine. Residues 598–607 (SPDSEVTSLC) are compositionally biased toward polar residues. Phosphothreonine is present on threonine 648. Residues serine 649, serine 658, and serine 695 each carry the phosphoserine modification. Positions 659 to 707 (PIPDMSKFATGITPFEFENMAESTGMYLRIRSLLKNSPRNQQKNKKASE) are MTREX binding.

It belongs to the ZCCHC8 family. In terms of assembly, component of a nuclear TRAMP-like complex, an ATP-dependent exosome regulatory complex consisting of a helicase (MTREX), an oligadenylate polymerase (TENT4B or TENT4A), and a substrate specific RNA-binding factor (ZCCHC7 or ZCCHC8). Several TRAMP-like complexes exist with specific compositions and are associated with nuclear, or nucleolar RNA exosomes. Identified in the spliceosome C complex. Component of the nuclear exosome targeting (NEXT) complex composed of MTREX, ZCCHC8, and RBM7 that directs a subset of non-coding short-lived RNAs for exosomal degradation. Interacts with proteins involved in RNA processing and degradation such as MTREX and RBM7; interaction with MTREX enhances MTREX RNA helicase activity and bridges between RBM7 and MTREX. Interacts with TERC, the telomerase RNA component. Post-translationally, phosphorylation at Thr-492 by GSK3 is triggered in cells entering mitosis; this phosphorylation is greatly enhanced by nocodazole treatment, but reduced by lithium.

It is found in the nucleus. Its subcellular location is the nucleoplasm. Its function is as follows. Scaffolding subunit of the trimeric nuclear exosome targeting (NEXT) complex that is involved in the surveillance and turnover of aberrant transcripts and non-coding RNAs. NEXT functions as an RNA exosome cofactor that directs a subset of non-coding short-lived RNAs for exosomal degradation. May be involved in pre-mRNA splicing. It is required for 3'-end maturation of telomerase RNA component (TERC), TERC 3'-end targeting to the nuclear RNA exosome, and for telomerase function. In Homo sapiens (Human), this protein is Zinc finger CCHC domain-containing protein 8 (ZCCHC8).